A 985-amino-acid chain; its full sequence is SWI/SNF complex subunit SWI3D (985 aa).

The disordered stretch occupies residues 1-55 (MEEKRRDSAGTLAFAGSSGDSPASEPMPAPRRRGGGLKRKANALGGSNFFSSAPS). Positions 30–41 (PRRRGGGLKRKA) are enriched in basic residues. A coiled-coil region spans residues 108 to 133 (EKPKEEEERNKAIREWEALEAKIEAD). One can recognise an SWIRM domain in the interval 145–242 (HVVPNHCGWF…FHPFPPTDTG (98 aa)). A ZZ-type; degenerate zinc finger spans residues 305–359 (AVEYHCNSCSADCSRKRYHCPKQADFDLCTECFNSGKFSSDMSSSDFILMEPAEA). Zn(2+) contacts are provided by C310, C313, C333, and C336. In terms of domain architecture, SANT spans 362 to 413 (VGSGKWTDQETLLLLEALEIFKENWNEIAEHVATKTKAQCMLHFLQMPIEDA). Basic and acidic residues-rich tracts occupy residues 428-464 (TTDL…KEVP), 493-502 (AEQKTPKLET), and 615-661 (DNSH…EKQP). Disordered stretches follow at residues 428 to 502 (TTDL…KLET) and 591 to 814 (EDPP…EGKK). Polar residues predominate over residues 662-671 (GSRTENSTTK). Residues 703–724 (CSGKELQEPLKDGNKLSSENKD) show a composition bias toward basic and acidic residues. The segment covering 725 to 736 (ASQSTVSQSAAD) has biased composition (polar residues). A compositionally biased stretch (basic and acidic residues) spans 742–776 (ASRDVEMKDTLQSEKDPEDVVKTVGEKVQLAKEEG). The span at 780–800 (VLSTPDKSVSQQPIGSASAPE) shows a compositional bias: polar residues. A coiled-coil region spans residues 839-900 (ISAAAVKAKN…EQLERSRQRL (62 aa)). The segment at 944–985 (MAFPRPPMPRPPGFPVPGSFVAATTMTGSSDPSPGSDNVSSV) is disordered. The segment covering 947 to 958 (PRPPMPRPPGFP) has biased composition (pro residues). Polar residues predominate over residues 965–985 (AATTMTGSSDPSPGSDNVSSV).

In terms of assembly, interacts with SWI3B, but not with BSH. Component of a RNA-directed DNA methylation (RdDM) complex that contains at least MORC6, MORC1/CRT1, MORC2, SWI3D and SUVH9. Interacts with MORC6 and SUVH9. In terms of tissue distribution, ubiquitously expressed.

It localises to the nucleus. Functionally, component of a multiprotein complex equivalent of the SWI/SNF complex, an ATP-dependent chromatin-remodeling complex, which is required for the positive and negative regulation of gene expression of a large number of genes. It changes chromatin structure by altering DNA-histone contacts within a nucleosome, leading eventually to a change in nucleosome position, thus facilitating or repressing binding of gene-specific transcription factors. The polypeptide is SWI/SNF complex subunit SWI3D (SWI3D) (Arabidopsis thaliana (Mouse-ear cress)).